The chain runs to 315 residues: uncharacterized protein (315 aa).

This is an uncharacterized protein from Caenorhabditis elegans.